Reading from the N-terminus, the 288-residue chain is Ribosomal RNA small subunit methyltransferase A (288 aa).

Residues 1-14 (MSKNQGGNKHQGGS) show a composition bias toward polar residues. Residues 1-21 (MSKNQGGNKHQGGSKTHLGHR) form a disordered region. 6 residues coordinate S-adenosyl-L-methionine: Asn29, Leu31, Gly56, Glu77, Asp102, and Asn122.

The protein belongs to the class I-like SAM-binding methyltransferase superfamily. rRNA adenine N(6)-methyltransferase family. RsmA subfamily.

Its subcellular location is the cytoplasm. It catalyses the reaction adenosine(1518)/adenosine(1519) in 16S rRNA + 4 S-adenosyl-L-methionine = N(6)-dimethyladenosine(1518)/N(6)-dimethyladenosine(1519) in 16S rRNA + 4 S-adenosyl-L-homocysteine + 4 H(+). Functionally, specifically dimethylates two adjacent adenosines (A1518 and A1519) in the loop of a conserved hairpin near the 3'-end of 16S rRNA in the 30S particle. May play a critical role in biogenesis of 30S subunits. This Idiomarina loihiensis (strain ATCC BAA-735 / DSM 15497 / L2-TR) protein is Ribosomal RNA small subunit methyltransferase A.